The chain runs to 424 residues: Histidine--tRNA ligase (424 aa).

This sequence belongs to the class-II aminoacyl-tRNA synthetase family. In terms of assembly, homodimer.

The protein localises to the cytoplasm. It carries out the reaction tRNA(His) + L-histidine + ATP = L-histidyl-tRNA(His) + AMP + diphosphate + H(+). The protein is Histidine--tRNA ligase of Salmonella arizonae (strain ATCC BAA-731 / CDC346-86 / RSK2980).